The chain runs to 166 residues: Interleukin-3 (166 aa).

A signal peptide spans 1 to 26 (MVLASSTTSIHTMLLLLLMLFHLGLQ). An N-linked (GlcNAc...) asparagine glycan is attached at N42. 2 disulfide bridges follow: C43–C106 and C105–C166. A glycan (N-linked (GlcNAc...) asparagine; partial) is linked at N112. The segment at 145-166 (LTSRPPQPASGSVSPNRGTVEC) is disordered.

This sequence belongs to the IL-3 family. As to quaternary structure, monomer. As to expression, activated T-cells, mast cells, natural killer cells.

It is found in the secreted. Functionally, cytokine secreted predominantly by activated T-lymphocytes as well as mast cells and osteoblastic cells that controls the production and differentiation of hematopoietic progenitor cells into lineage-restricted cells. Also stimulates mature basophils, eosinophils, and monocytes to become functionally activated. In addition, plays an important role in neural cell proliferation and survival. Participates as well in bone homeostasis and inhibits osteoclast differentiation by preventing NF-kappa-B nuclear translocation and activation. Mechanistically, exerts its biological effects through a receptor composed of IL3RA subunit and a signal transducing subunit IL3RB. Receptor stimulation results in the rapid activation of JAK2 kinase activity leading to STAT5-mediated transcriptional program. Alternatively, contributes to cell survival under oxidative stress in non-hematopoietic systems by activating pathways mediated by PI3K/AKT and ERK. The sequence is that of Interleukin-3 (Il3) from Mus musculus (Mouse).